Reading from the N-terminus, the 386-residue chain is S-adenosylmethionine synthase (386 aa).

Position 16 (His16) interacts with ATP. Asp18 contributes to the Mg(2+) binding site. Residue Glu44 coordinates K(+). L-methionine is bound by residues Glu57 and Gln100. A flexible loop region spans residues 100 to 110 (QSSDIAQGVDR). ATP contacts are provided by residues 165–167 (DAK), Asp240, 246–247 (RK), Ala263, and Lys267. L-methionine is bound at residue Asp240. Lys271 is a binding site for L-methionine.

The protein belongs to the AdoMet synthase family. In terms of assembly, homotetramer; dimer of dimers. It depends on Mg(2+) as a cofactor. K(+) serves as cofactor.

It localises to the cytoplasm. The enzyme catalyses L-methionine + ATP + H2O = S-adenosyl-L-methionine + phosphate + diphosphate. The protein operates within amino-acid biosynthesis; S-adenosyl-L-methionine biosynthesis; S-adenosyl-L-methionine from L-methionine: step 1/1. Catalyzes the formation of S-adenosylmethionine (AdoMet) from methionine and ATP. The overall synthetic reaction is composed of two sequential steps, AdoMet formation and the subsequent tripolyphosphate hydrolysis which occurs prior to release of AdoMet from the enzyme. The protein is S-adenosylmethionine synthase of Francisella philomiragia subsp. philomiragia (strain ATCC 25017 / CCUG 19701 / FSC 153 / O#319-036).